The following is a 156-amino-acid chain: Endoribonuclease YbeY (156 aa).

Zn(2+)-binding residues include His122, His126, and His132.

It belongs to the endoribonuclease YbeY family. Zn(2+) serves as cofactor.

It is found in the cytoplasm. Its function is as follows. Single strand-specific metallo-endoribonuclease involved in late-stage 70S ribosome quality control and in maturation of the 3' terminus of the 16S rRNA. This Bacillus cereus (strain ATCC 10987 / NRS 248) protein is Endoribonuclease YbeY.